The sequence spans 533 residues: Retinoid isomerohydrolase (533 aa).

The residue at position 2 (Ser2) is an N-acetylserine. Cys112 is lipidated: S-palmitoyl cysteine; in membrane form. A Fe cation-binding site is contributed by His180. The S-palmitoyl cysteine; in membrane form moiety is linked to residue Cys231. His241 and His313 together coordinate Fe cation. S-palmitoyl cysteine; in membrane form attachment occurs at residues Cys329 and Cys330. His527 lines the Fe cation pocket.

The protein belongs to the carotenoid oxygenase family. The cofactor is Fe(2+). Post-translationally, palmitoylation by LRAT regulates ligand binding specificity; the palmitoylated form (membrane form) specifically binds all-trans-retinyl-palmitate, while the soluble unpalmitoylated form binds all-trans-retinol (vitamin A). In terms of tissue distribution, retinal pigment epithelium specific.

Its subcellular location is the cell membrane. It carries out the reaction an all-trans-retinyl ester + H2O = 11-cis-retinol + a fatty acid + H(+). It catalyses the reaction lutein = (3R,3'S)-zeaxanthin. The catalysed reaction is all-trans-retinyl hexadecanoate + H2O = 11-cis-retinol + hexadecanoate + H(+). Critical isomerohydrolase in the retinoid cycle involved in regeneration of 11-cis-retinal, the chromophore of rod and cone opsins. Catalyzes the cleavage and isomerization of all-trans-retinyl fatty acid esters to 11-cis-retinol which is further oxidized by 11-cis retinol dehydrogenase to 11-cis-retinal for use as visual chromophore. Essential for the production of 11-cis retinal for both rod and cone photoreceptors. Also capable of catalyzing the isomerization of lutein to meso-zeaxanthin an eye-specific carotenoid. The soluble form binds vitamin A (all-trans-retinol), making it available for LRAT processing to all-trans-retinyl ester. The membrane form, palmitoylated by LRAT, binds all-trans-retinyl esters, making them available for IMH (isomerohydrolase) processing to all-cis-retinol. The soluble form is regenerated by transferring its palmitoyl groups onto 11-cis-retinol, a reaction catalyzed by LRAT. The protein is Retinoid isomerohydrolase (RPE65) of Cynops pyrrhogaster (Japanese fire-bellied newt).